A 103-amino-acid chain; its full sequence is Small ribosomal subunit protein uS10 (103 aa).

The protein belongs to the universal ribosomal protein uS10 family. Part of the 30S ribosomal subunit.

Functionally, involved in the binding of tRNA to the ribosomes. The sequence is that of Small ribosomal subunit protein uS10 from Blochmanniella pennsylvanica (strain BPEN).